Reading from the N-terminus, the 65-residue chain is Diapause-specific peptide (65 aa).

A signal peptide spans 1-24 (MGAALKMTIFLLIVACAMIATTEA). 3 disulfides stabilise this stretch: Cys31/Cys45, Cys35/Cys57, and Cys46/Cys64.

In terms of tissue distribution, highly expressed in the fat body.

Its subcellular location is the secreted. Has antifungal activity against T.rubrum. Blocks voltage-dependent N-type calcium channels (Cav2.2 / CACNA1B). In Gastrophysa atrocyanea (Leaf beetle), this protein is Diapause-specific peptide.